The following is a 544-amino-acid chain: Protein nucleotidyltransferase YdiU (544 aa).

ATP-binding residues include Gly-133, Gly-135, Arg-136, Lys-155, Asp-167, Gly-168, Arg-218, and Arg-225. Catalysis depends on Asp-294, which acts as the Proton acceptor. Residues Asn-295 and Asp-304 each coordinate Mg(2+). An ATP-binding site is contributed by Asp-304.

This sequence belongs to the SELO family. Mg(2+) serves as cofactor. Requires Mn(2+) as cofactor.

It carries out the reaction L-seryl-[protein] + ATP = 3-O-(5'-adenylyl)-L-seryl-[protein] + diphosphate. It catalyses the reaction L-threonyl-[protein] + ATP = 3-O-(5'-adenylyl)-L-threonyl-[protein] + diphosphate. The enzyme catalyses L-tyrosyl-[protein] + ATP = O-(5'-adenylyl)-L-tyrosyl-[protein] + diphosphate. The catalysed reaction is L-histidyl-[protein] + UTP = N(tele)-(5'-uridylyl)-L-histidyl-[protein] + diphosphate. It carries out the reaction L-seryl-[protein] + UTP = O-(5'-uridylyl)-L-seryl-[protein] + diphosphate. It catalyses the reaction L-tyrosyl-[protein] + UTP = O-(5'-uridylyl)-L-tyrosyl-[protein] + diphosphate. Nucleotidyltransferase involved in the post-translational modification of proteins. It can catalyze the addition of adenosine monophosphate (AMP) or uridine monophosphate (UMP) to a protein, resulting in modifications known as AMPylation and UMPylation. This is Protein nucleotidyltransferase YdiU from Cupriavidus metallidurans (strain ATCC 43123 / DSM 2839 / NBRC 102507 / CH34) (Ralstonia metallidurans).